Here is a 400-residue protein sequence, read N- to C-terminus: PHD finger protein 24 (400 aa).

Glycine 2 is lipidated: N-myristoyl glycine. The interval 30–108 is disordered; sequence DRPSIRRTGE…FTPPAFIRPT (79 aa). Arginine 36 carries the omega-N-methylarginine modification. Serine 43 carries the post-translational modification Phosphoserine. Threonine 47 is modified (phosphothreonine). Serine 51 carries the post-translational modification Phosphoserine. Basic and acidic residues predominate over residues 78 to 97; sequence AWERLRDGRGVEPEEFDRTG. Residues 129 to 190 form a PHD-type zinc finger; it reads NDEMCDVCEV…TGWSCHYCDN (62 aa).

This Pongo abelii (Sumatran orangutan) protein is PHD finger protein 24.